Reading from the N-terminus, the 114-residue chain is Large ribosomal subunit protein P2 (114 aa).

Gly residues predominate over residues 74 to 83 (AAAAGGGGGD). The interval 74–114 (AAAAGGGGGDAPAAAAEEPKKEEKSEEESDEELGFSLFDDN) is disordered. Positions 98–114 (SEEESDEELGFSLFDDN) are enriched in acidic residues.

The protein belongs to the eukaryotic ribosomal protein P1/P2 family. In terms of assembly, P1 and P2 exist as dimers at the large ribosomal subunit. In terms of processing, phosphorylated.

Plays an important role in the elongation step of protein synthesis. The sequence is that of Large ribosomal subunit protein P2 from Parthenium argentatum (Guayule rubber plant).